The sequence spans 22 residues: MICOS complex subunit MIC60 (22 aa).

The protein belongs to the MICOS complex subunit Mic60 family. As to quaternary structure, component of the mitochondrial contact site and cristae organizing system (MICOS) complex, composed of at least MICOS10/MIC10, CHCHD3/MIC19, CHCHD6/MIC25, APOOL/MIC27, IMMT/MIC60, APOO/MIC23/MIC26 and MICOS13/MIC13. This complex was also known under the names MINOS or MitOS complex. The MICOS complex associates with mitochondrial outer membrane proteins SAMM50, MTX1 and MTX2 (together described as components of the mitochondrial outer membrane sorting assembly machinery (SAM) complex) and DNAJC11, mitochondrial inner membrane protein TMEM11 and with HSPA9. The MICOS and SAM complexes together with DNAJC11 are part of a large protein complex spanning both membranes termed the mitochondrial intermembrane space bridging (MIB) complex. Interacts with HSPA1A/HSPA1B and OPA1, preferentially with the soluble OPA1 form. Interacts with MICOS13/MIC13, MICOS10/MIC10, CHCHD3/MIC19, CHCHD6/MIC25, SAMM50 and TMEM11. Interacts with APOO/MIC23/MIC26 and APOOL/MIC27. Interacts with ARMC1. Interacts with ARMC12.

The protein resides in the mitochondrion inner membrane. Its subcellular location is the mitochondrion. Functionally, component of the MICOS complex, a large protein complex of the mitochondrial inner membrane that plays crucial roles in the maintenance of crista junctions, inner membrane architecture, and formation of contact sites to the outer membrane. Plays an important role in the maintenance of the MICOS complex stability and the mitochondrial cristae morphology. The sequence is that of MICOS complex subunit MIC60 from Mesocricetus auratus (Golden hamster).